The following is a 74-amino-acid chain: Protein SlyX homolog (74 aa).

The interval 54–74 is disordered; the sequence is QDRNPDAQEPYSLRDEIPPHY.

The protein belongs to the SlyX family.

In Neisseria gonorrhoeae (strain ATCC 700825 / FA 1090), this protein is Protein SlyX homolog.